We begin with the raw amino-acid sequence, 233 residues long: 7-cyano-7-deazaguanine synthase (233 aa).

13–23 serves as a coordination point for ATP; that stretch reads LSGGLDSATAM. Residues C197, C207, C210, and C213 each contribute to the Zn(2+) site.

This sequence belongs to the QueC family. It depends on Zn(2+) as a cofactor.

It catalyses the reaction 7-carboxy-7-deazaguanine + NH4(+) + ATP = 7-cyano-7-deazaguanine + ADP + phosphate + H2O + H(+). It functions in the pathway purine metabolism; 7-cyano-7-deazaguanine biosynthesis. Its function is as follows. Catalyzes the ATP-dependent conversion of 7-carboxy-7-deazaguanine (CDG) to 7-cyano-7-deazaguanine (preQ(0)). The polypeptide is 7-cyano-7-deazaguanine synthase (Desulfatibacillum aliphaticivorans).